A 278-amino-acid polypeptide reads, in one-letter code: Nucleotide-binding protein Tlet_0523 (278 aa).

9-16 (GLSGAGKS) is a binding site for ATP. 58-61 (DIRS) contributes to the GTP binding site.

This sequence belongs to the RapZ-like family.

Functionally, displays ATPase and GTPase activities. In Pseudothermotoga lettingae (strain ATCC BAA-301 / DSM 14385 / NBRC 107922 / TMO) (Thermotoga lettingae), this protein is Nucleotide-binding protein Tlet_0523.